The primary structure comprises 359 residues: Membrane-bound lytic murein transglycosylase C (359 aa).

Positions 1–16 (MKKYLALALIAPLLIS) are cleaved as a signal peptide. The N-palmitoyl cysteine moiety is linked to residue C17. C17 carries S-diacylglycerol cysteine lipidation.

Belongs to the transglycosylase Slt family.

Its subcellular location is the cell outer membrane. The enzyme catalyses Exolytic cleavage of the (1-&gt;4)-beta-glycosidic linkage between N-acetylmuramic acid (MurNAc) and N-acetylglucosamine (GlcNAc) residues in peptidoglycan, from either the reducing or the non-reducing ends of the peptidoglycan chains, with concomitant formation of a 1,6-anhydrobond in the MurNAc residue.. In terms of biological role, murein-degrading enzyme. May play a role in recycling of muropeptides during cell elongation and/or cell division. The chain is Membrane-bound lytic murein transglycosylase C from Escherichia coli O81 (strain ED1a).